A 266-amino-acid chain; its full sequence is Protein YABBY 5 (266 aa).

Positions 1–22 (MMSSAPETFSLDHLSQHQQQQP) are disordered. A C4-type zinc finger spans residues 36–63 (CNFCDTILAVGVPCSSLFKTVTVRCGHC). Low complexity predominate over residues 119 to 141 (ASPNVSSITSSNSSCANNAPATS). A disordered region spans residues 119–174 (ASPNVSSITSSNSSCANNAPATSMASAANKATQREPQQPKNAPSANRTSEKRQRVP). A compositionally biased stretch (polar residues) spans 142 to 165 (MASAANKATQREPQQPKNAPSANR).

This sequence belongs to the YABBY family.

It is found in the nucleus. May be involved in leaf cell growth and differentiation, rather than abaxial cell fate determination. This Oryza sativa subsp. indica (Rice) protein is Protein YABBY 5 (YAB5).